A 426-amino-acid chain; its full sequence is Serine hydroxymethyltransferase (426 aa).

(6S)-5,6,7,8-tetrahydrofolate contacts are provided by residues L113 and 117–119 (GHL). K222 is modified (N6-(pyridoxal phosphate)lysine). Position 363–365 (363–365 (SAF)) interacts with (6S)-5,6,7,8-tetrahydrofolate.

It belongs to the SHMT family. As to quaternary structure, homodimer. The cofactor is pyridoxal 5'-phosphate.

Its subcellular location is the cytoplasm. It catalyses the reaction (6R)-5,10-methylene-5,6,7,8-tetrahydrofolate + glycine + H2O = (6S)-5,6,7,8-tetrahydrofolate + L-serine. It participates in one-carbon metabolism; tetrahydrofolate interconversion. The protein operates within amino-acid biosynthesis; glycine biosynthesis; glycine from L-serine: step 1/1. Catalyzes the reversible interconversion of serine and glycine with tetrahydrofolate (THF) serving as the one-carbon carrier. This reaction serves as the major source of one-carbon groups required for the biosynthesis of purines, thymidylate, methionine, and other important biomolecules. Also exhibits THF-independent aldolase activity toward beta-hydroxyamino acids, producing glycine and aldehydes, via a retro-aldol mechanism. The polypeptide is Serine hydroxymethyltransferase (Bacteroides fragilis (strain ATCC 25285 / DSM 2151 / CCUG 4856 / JCM 11019 / LMG 10263 / NCTC 9343 / Onslow / VPI 2553 / EN-2)).